The following is a 526-amino-acid chain: Probable fucosyltransferase 7 (526 aa).

Over 1 to 4 (MKTK) the chain is Cytoplasmic. The helical; Signal-anchor for type II membrane protein transmembrane segment at 5-25 (LMITIFSCLLLWSMLLLLSFS) threads the bilayer. Topologically, residues 26–526 (NIFKHQLLGA…KLVDDTKNEL (501 aa)) are lumenal. N-linked (GlcNAc...) asparagine glycans are attached at residues N211, N215, and N363.

This sequence belongs to the glycosyltransferase 37 family. In terms of tissue distribution, expressed in roots, leaves, stems and seedlings.

Its subcellular location is the golgi apparatus. The protein localises to the golgi stack membrane. Its pathway is protein modification; protein glycosylation. Its function is as follows. May be involved in cell wall biosynthesis. May act as a fucosyltransferase. In Arabidopsis thaliana (Mouse-ear cress), this protein is Probable fucosyltransferase 7 (FUT7).